We begin with the raw amino-acid sequence, 272 residues long: ATP synthase subunit a (272 aa).

5 helical membrane-spanning segments follow: residues 41–61 (VLNI…LLIF), 101–121 (LIAP…LMDL), 143–165 (VPSA…ILYY), 221–241 (LIFI…LNVP), and 243–263 (AIFH…LTIV).

Belongs to the ATPase A chain family. As to quaternary structure, F-type ATPases have 2 components, CF(1) - the catalytic core - and CF(0) - the membrane proton channel. CF(1) has five subunits: alpha(3), beta(3), gamma(1), delta(1), epsilon(1). CF(0) has three main subunits: a(1), b(2) and c(9-12). The alpha and beta chains form an alternating ring which encloses part of the gamma chain. CF(1) is attached to CF(0) by a central stalk formed by the gamma and epsilon chains, while a peripheral stalk is formed by the delta and b chains.

Its subcellular location is the cell inner membrane. Its function is as follows. Key component of the proton channel; it plays a direct role in the translocation of protons across the membrane. In Sodalis glossinidius (strain morsitans), this protein is ATP synthase subunit a.